The following is a 592-amino-acid chain: Bifunctional purine biosynthesis protein ATIC (592 aa).

Met-1 is subject to N-acetylmethionine. The MGS-like domain occupies 1–146 (MAPGHLALFS…KNHARVTVVC (146 aa)). An IMP cyclohydrolase region spans residues 1–198 (MAPGHLALFS…ISDYFRKQYS (198 aa)). IMP-binding positions include 12-14 (SDK), 34-37 (SGGT), 64-67 (RVKT), 101-102 (CN), and 125-126 (DI). Residue Lys-137 is the Proton donor/acceptor; for FAICAR cyclization activity of the active site. Residue Lys-199 is modified to N6-acetyllysine. The interval 199 to 592 (KGISQMPLRY…AHTNLRLFHH (394 aa)) is AICAR formyltransferase. 5-amino-1-(5-phospho-beta-D-ribosyl)imidazole-4-carboxamide contacts are provided by residues 207–208 (RY), His-267, Gly-316, Asp-339, Asn-431, and Arg-451. His-267 functions as the Proton acceptor; for AICAR formyltransferase activity in the catalytic mechanism. (6R)-10-formyltetrahydrofolate is bound at residue Ile-452. Phe-541 is a binding site for 5-amino-1-(5-phospho-beta-D-ribosyl)imidazole-4-carboxamide. Residues Asp-546 and 565 to 566 (SA) contribute to the (6R)-10-formyltetrahydrofolate site. Arg-588 is a binding site for 5-amino-1-(5-phospho-beta-D-ribosyl)imidazole-4-carboxamide.

It belongs to the PurH family. In terms of assembly, homodimer. Associates with internalized INSR complexes on Golgi/endosomal membranes. Interacts with INSR; ATIC together with PRKAA2/AMPK2 and HACD3/PTPLAD1 is proposed to be part of a signaling network regulating INSR autophosphorylation and endocytosis.

The protein resides in the cytoplasm. It localises to the cytosol. The enzyme catalyses (6R)-10-formyltetrahydrofolate + 5-amino-1-(5-phospho-beta-D-ribosyl)imidazole-4-carboxamide = 5-formamido-1-(5-phospho-D-ribosyl)imidazole-4-carboxamide + (6S)-5,6,7,8-tetrahydrofolate. It carries out the reaction 10-formyldihydrofolate + 5-amino-1-(5-phospho-beta-D-ribosyl)imidazole-4-carboxamide = 5-formamido-1-(5-phospho-D-ribosyl)imidazole-4-carboxamide + 7,8-dihydrofolate. It catalyses the reaction IMP + H2O = 5-formamido-1-(5-phospho-D-ribosyl)imidazole-4-carboxamide. It participates in purine metabolism; IMP biosynthesis via de novo pathway; 5-formamido-1-(5-phospho-D-ribosyl)imidazole-4-carboxamide from 5-amino-1-(5-phospho-D-ribosyl)imidazole-4-carboxamide (10-formyl THF route): step 1/1. Its pathway is purine metabolism; IMP biosynthesis via de novo pathway; IMP from 5-formamido-1-(5-phospho-D-ribosyl)imidazole-4-carboxamide: step 1/1. With respect to regulation, AMP and XMP inhibit AICAR formyltransferase activity. Functionally, bifunctional enzyme that catalyzes the last two steps of purine biosynthesis. Acts as a transformylase that incorporates a formyl group to the AMP analog AICAR (5-amino-1-(5-phospho-beta-D-ribosyl)imidazole-4-carboxamide) to produce the intermediate formyl-AICAR (FAICAR). Can use both 10-formyldihydrofolate and 10-formyltetrahydrofolate as the formyl donor in this reaction. Also catalyzes the cyclization of FAICAR to inosine monophosphate (IMP). Promotes insulin receptor/INSR autophosphorylation and is involved in INSR internalization. The sequence is that of Bifunctional purine biosynthesis protein ATIC (ATIC) from Pongo abelii (Sumatran orangutan).